Here is a 526-residue protein sequence, read N- to C-terminus: Light-independent protochlorophyllide reductase subunit B (526 aa).

Residue aspartate 36 participates in [4Fe-4S] cluster binding. Aspartate 290 serves as the catalytic Proton donor. Glycine 425–leucine 426 provides a ligand contact to substrate.

Belongs to the ChlB/BchB/BchZ family. In terms of assembly, protochlorophyllide reductase is composed of three subunits; ChlL, ChlN and ChlB. Forms a heterotetramer of two ChlB and two ChlN subunits. It depends on [4Fe-4S] cluster as a cofactor.

The catalysed reaction is chlorophyllide a + oxidized 2[4Fe-4S]-[ferredoxin] + 2 ADP + 2 phosphate = protochlorophyllide a + reduced 2[4Fe-4S]-[ferredoxin] + 2 ATP + 2 H2O. The protein operates within porphyrin-containing compound metabolism; chlorophyll biosynthesis (light-independent). Its function is as follows. Component of the dark-operative protochlorophyllide reductase (DPOR) that uses Mg-ATP and reduced ferredoxin to reduce ring D of protochlorophyllide (Pchlide) to form chlorophyllide a (Chlide). This reaction is light-independent. The NB-protein (ChlN-ChlB) is the catalytic component of the complex. This Prochlorococcus marinus subsp. pastoris (strain CCMP1986 / NIES-2087 / MED4) protein is Light-independent protochlorophyllide reductase subunit B.